The chain runs to 202 residues: Probable ATP-dependent Clp protease proteolytic subunit 3 (202 aa).

Catalysis depends on Ser101, which acts as the Nucleophile. The active site involves His126.

It belongs to the peptidase S14 family. In terms of assembly, fourteen ClpP subunits assemble into 2 heptameric rings which stack back to back to give a disk-like structure with a central cavity, resembling the structure of eukaryotic proteasomes.

It localises to the cytoplasm. The catalysed reaction is Hydrolysis of proteins to small peptides in the presence of ATP and magnesium. alpha-casein is the usual test substrate. In the absence of ATP, only oligopeptides shorter than five residues are hydrolyzed (such as succinyl-Leu-Tyr-|-NHMec, and Leu-Tyr-Leu-|-Tyr-Trp, in which cleavage of the -Tyr-|-Leu- and -Tyr-|-Trp bonds also occurs).. Cleaves peptides in various proteins in a process that requires ATP hydrolysis. Has a chymotrypsin-like activity. Plays a major role in the degradation of misfolded proteins. The polypeptide is Probable ATP-dependent Clp protease proteolytic subunit 3 (Synechocystis sp. (strain ATCC 27184 / PCC 6803 / Kazusa)).